Here is a 188-residue protein sequence, read N- to C-terminus: dCTP deaminase (188 aa).

DCTP contacts are provided by residues 111 to 116 (KSTYAR), 135 to 137 (TLE), Q156, Y170, K179, and Q180. The active-site Proton donor/acceptor is E137.

It belongs to the dCTP deaminase family. Homotrimer.

The enzyme catalyses dCTP + H2O + H(+) = dUTP + NH4(+). Its pathway is pyrimidine metabolism; dUMP biosynthesis; dUMP from dCTP (dUTP route): step 1/2. Functionally, catalyzes the deamination of dCTP to dUTP. This chain is dCTP deaminase, found in Rickettsia africae (strain ESF-5).